The primary structure comprises 5911 residues: Nonribosomal peptide synthetase 30 (5911 aa).

The interval 1–22 (MVPEKPTAQSKSGIGEPFRAGD) is disordered. The interval 352–754 (ALIQPSSTAV…GRKDAQVKIR (403 aa)) is adenylation 1. The Carrier 1 domain maps to 891-968 (PRPFSVEYSL…EAAAIVARGT (78 aa)). Serine 928 carries the post-translational modification O-(pantetheine 4'-phosphoryl)serine. The segment at 1007–1422 (EDAFPCTPLQ…ERLIFVIDQL (416 aa)) is condensation 1. The interval 1467-1865 (ERALSQPDRP…SLMFVGRKAD (399 aa)) is adenylation 2. Positions 2001 to 2077 (QPTSELEAEM…NICSHSYYCS (77 aa)) constitute a Carrier 2 domain. At serine 2038 the chain carries O-(pantetheine 4'-phosphoryl)serine. A condensation 2 region spans residues 2121-2538 (QDAYPCTPLQ…GPDINMSDIG (418 aa)). The tract at residues 2568 to 2977 (EEQARLRPEA…GRKDSQVKIR (410 aa)) is adenylation 3. The Carrier 3 domain maps to 3110 to 3186 (QPSTNAQREL…LIADNSKSIK (77 aa)). Residue serine 3147 is modified to O-(pantetheine 4'-phosphoryl)serine. Positions 3227–3652 (VQDAYPCTPL…LELVIQAFMA (426 aa)) are condensation 3. An adenylation 4 region spans residues 3701–4108 (EERVREQPNA…GRKDSQVKIR (408 aa)). In terms of domain architecture, Carrier 4 spans 4248 to 4325 (PPTTPLECQM…DIIATMTKNK (78 aa)). Residue serine 4285 is modified to O-(pantetheine 4'-phosphoryl)serine. The tract at residues 4326–4347 (ATGASRRLPRDDDEPIPHTKYA) is disordered. A condensation 4 region spans residues 4353 to 4793 (SYAQGRLWFL…SLPLLTEDGR (441 aa)). The interval 4819–5231 (FKEQVSRHPN…GRMDVQVKIR (413 aa)) is adenylation 5. The Carrier 5 domain occupies 5360–5436 (KPTTDMEVAL…ALARRQEEIV (77 aa)). Serine 5397 bears the O-(pantetheine 4'-phosphoryl)serine mark. Positions 5474-5828 (VEDMLPLTSM…GIKMKLHFFT (355 aa)) are condensation 5.

It belongs to the NRP synthetase family.

The protein operates within secondary metabolite biosynthesis. Its function is as follows. Nonribosomal peptide synthetase; part of the gene cluster that mediates the biosynthesis of sansalvamide, a cyclic pentadepsipeptide that shows promising results as potential anti-cancer drug. The nonribosmal peptide synthetase NRPS30 produces sansalvamide by incorporating successively one phenylalanine, one leucine, one alpha-hydroxyisocaproic acid (HICA), one valine and one leucine before sansalvamide is released from by cyclization by the terminal C domain of NRPS30. The HICA residue is probably provided by reduction of alpha-ketoisocaproate by the cluster-specific aldo-keto reductase (NECHADRAFT_45914). In Fusarium vanettenii (strain ATCC MYA-4622 / CBS 123669 / FGSC 9596 / NRRL 45880 / 77-13-4) (Fusarium solani subsp. pisi), this protein is Nonribosomal peptide synthetase 30.